Consider the following 358-residue polypeptide: Peptide chain release factor 1 (358 aa).

Position 237 is an N5-methylglutamine (glutamine 237).

It belongs to the prokaryotic/mitochondrial release factor family. Post-translationally, methylated by PrmC. Methylation increases the termination efficiency of RF1.

The protein resides in the cytoplasm. In terms of biological role, peptide chain release factor 1 directs the termination of translation in response to the peptide chain termination codons UAG and UAA. This chain is Peptide chain release factor 1, found in Mycoplasma mobile (strain ATCC 43663 / 163K / NCTC 11711) (Mesomycoplasma mobile).